The sequence spans 256 residues: Large ribosomal subunit protein eL8y (256 aa).

Over residues 1–15 (MAPKKGVKVASKKKP) the composition is skewed to basic residues. Residues 1–20 (MAPKKGVKVASKKKPEKVTN) form a disordered region.

Belongs to the eukaryotic ribosomal protein eL8 family.

This chain is Large ribosomal subunit protein eL8y (RPL7AB), found in Arabidopsis thaliana (Mouse-ear cress).